Consider the following 334-residue polypeptide: Uracil-DNA glycosylase (334 aa).

A compositionally biased stretch (basic residues) spans Met1–Ser17. Disordered regions lie at residues Met1–Ser63 and Val79–Ser104. Over residues Gly40–Arg50 the composition is skewed to polar residues. The active-site Proton acceptor is Asp178.

It belongs to the uracil-DNA glycosylase (UDG) superfamily. UNG family.

It is found in the host nucleus. The catalysed reaction is Hydrolyzes single-stranded DNA or mismatched double-stranded DNA and polynucleotides, releasing free uracil.. Its function is as follows. Excises uracil residues from the DNA which can arise as a result of misincorporation of dUMP residues by DNA polymerase or deamination of cytosines. Therefore may reduce deleterious uracil incorporation into the viral genome, particularly in terminally differentiated cells which lack DNA repair enzymes. This is Uracil-DNA glycosylase from Human herpesvirus 1 (strain 17) (HHV-1).